The chain runs to 160 residues: SsrA-binding protein (160 aa).

The segment at 136 to 160 (KRDTMRERDSNRELQRAVRNKGKED) is disordered.

It belongs to the SmpB family.

It localises to the cytoplasm. Functionally, required for rescue of stalled ribosomes mediated by trans-translation. Binds to transfer-messenger RNA (tmRNA), required for stable association of tmRNA with ribosomes. tmRNA and SmpB together mimic tRNA shape, replacing the anticodon stem-loop with SmpB. tmRNA is encoded by the ssrA gene; the 2 termini fold to resemble tRNA(Ala) and it encodes a 'tag peptide', a short internal open reading frame. During trans-translation Ala-aminoacylated tmRNA acts like a tRNA, entering the A-site of stalled ribosomes, displacing the stalled mRNA. The ribosome then switches to translate the ORF on the tmRNA; the nascent peptide is terminated with the 'tag peptide' encoded by the tmRNA and targeted for degradation. The ribosome is freed to recommence translation, which seems to be the essential function of trans-translation. This is SsrA-binding protein from Pseudomonas putida (strain GB-1).